Here is a 334-residue protein sequence, read N- to C-terminus: Holliday junction branch migration complex subunit RuvB (334 aa).

Residues 4–186 form a large ATPase domain (RuvB-L) region; that stretch reads ADRLIAPENP…FGITQRLEYY (183 aa). ATP-binding positions include Ile-25, Arg-26, Gly-67, Lys-70, Thr-71, Thr-72, 133-135, Arg-176, Tyr-186, and Arg-223; that span reads EDY. Residue Thr-71 coordinates Mg(2+). A small ATPAse domain (RuvB-S) region spans residues 187–257; that stretch reads KIPDLQNIVQ…TADKALNMLD (71 aa). The head domain (RuvB-H) stretch occupies residues 260–334; that stretch reads SKGFDYMDRK…RAYLHFGIEK (75 aa). The DNA site is built by Arg-315 and Arg-320.

This sequence belongs to the RuvB family. As to quaternary structure, homohexamer. Forms an RuvA(8)-RuvB(12)-Holliday junction (HJ) complex. HJ DNA is sandwiched between 2 RuvA tetramers; dsDNA enters through RuvA and exits via RuvB. An RuvB hexamer assembles on each DNA strand where it exits the tetramer. Each RuvB hexamer is contacted by two RuvA subunits (via domain III) on 2 adjacent RuvB subunits; this complex drives branch migration. In the full resolvosome a probable DNA-RuvA(4)-RuvB(12)-RuvC(2) complex forms which resolves the HJ.

The protein localises to the cytoplasm. The enzyme catalyses ATP + H2O = ADP + phosphate + H(+). Functionally, the RuvA-RuvB-RuvC complex processes Holliday junction (HJ) DNA during genetic recombination and DNA repair, while the RuvA-RuvB complex plays an important role in the rescue of blocked DNA replication forks via replication fork reversal (RFR). RuvA specifically binds to HJ cruciform DNA, conferring on it an open structure. The RuvB hexamer acts as an ATP-dependent pump, pulling dsDNA into and through the RuvAB complex. RuvB forms 2 homohexamers on either side of HJ DNA bound by 1 or 2 RuvA tetramers; 4 subunits per hexamer contact DNA at a time. Coordinated motions by a converter formed by DNA-disengaged RuvB subunits stimulates ATP hydrolysis and nucleotide exchange. Immobilization of the converter enables RuvB to convert the ATP-contained energy into a lever motion, pulling 2 nucleotides of DNA out of the RuvA tetramer per ATP hydrolyzed, thus driving DNA branch migration. The RuvB motors rotate together with the DNA substrate, which together with the progressing nucleotide cycle form the mechanistic basis for DNA recombination by continuous HJ branch migration. Branch migration allows RuvC to scan DNA until it finds its consensus sequence, where it cleaves and resolves cruciform DNA. The chain is Holliday junction branch migration complex subunit RuvB from Vibrio vulnificus (strain YJ016).